We begin with the raw amino-acid sequence, 318 residues long: Carbamate kinase (318 aa).

The protein belongs to the carbamate kinase family.

Its subcellular location is the cytoplasm. It carries out the reaction hydrogencarbonate + NH4(+) + ATP = carbamoyl phosphate + ADP + H2O + H(+). It participates in metabolic intermediate metabolism; carbamoyl phosphate degradation; CO(2) and NH(3) from carbamoyl phosphate: step 1/1. The sequence is that of Carbamate kinase (arcC) from Lentilactobacillus hilgardii (Lactobacillus hilgardii).